A 415-amino-acid polypeptide reads, in one-letter code: Glutamyl-tRNA reductase (415 aa).

Substrate is bound by residues 49–52 (TCNR), S104, 109–111 (EPQ), and Q115. C50 serves as the catalytic Nucleophile. 184-189 (GAGEMI) contributes to the NADP(+) binding site.

Belongs to the glutamyl-tRNA reductase family. Homodimer.

It catalyses the reaction (S)-4-amino-5-oxopentanoate + tRNA(Glu) + NADP(+) = L-glutamyl-tRNA(Glu) + NADPH + H(+). It functions in the pathway porphyrin-containing compound metabolism; protoporphyrin-IX biosynthesis; 5-aminolevulinate from L-glutamyl-tRNA(Glu): step 1/2. In terms of biological role, catalyzes the NADPH-dependent reduction of glutamyl-tRNA(Glu) to glutamate 1-semialdehyde (GSA). In Neisseria gonorrhoeae (strain ATCC 700825 / FA 1090), this protein is Glutamyl-tRNA reductase.